An 802-amino-acid chain; its full sequence is Aldehyde dehydrogenase family 16 member A1 (802 aa).

The protein belongs to the aldehyde dehydrogenase family. As to quaternary structure, interacts with SPG21.

The polypeptide is Aldehyde dehydrogenase family 16 member A1 (Aldh16a1) (Mus musculus (Mouse)).